The following is a 661-amino-acid chain: Ecdysteroid-phosphate phosphatase (661 aa).

In terms of domain architecture, UBA spans lysine 16–histidine 57. The 66-residue stretch at alanine 235 to glutamate 300 folds into the SH3 domain. Arginine 409 is an active-site residue. The active-site Tele-phosphohistidine intermediate is histidine 410. Histidine 590 is an active-site residue.

In terms of assembly, homodimer. In terms of tissue distribution, detected in non-diapause eggs, with highest expression between 2 and 5 days after oviposition. Not detected in other tissues tested.

The protein localises to the cytoplasm. It is found in the cytosol. It carries out the reaction ecdysone 22-phosphate + H2O = ecdysone + phosphate. The catalysed reaction is 20-hydroxyecdysone 22-phosphate + H2O = 20-hydroxyecdysone + phosphate. The enzyme catalyses 2-deoxyecdysone 22-phosphate + H2O = 2-deoxyecdysone + phosphate. It catalyses the reaction O-phospho-L-tyrosyl-[protein] + H2O = L-tyrosyl-[protein] + phosphate. Its activity is regulated as follows. Competitively inhibited by 4-nitrophenyl phosphate (para-nitrophenylphosphate, pNPP). Also inhibited by tungstate, vanadate, and phosphate. Its function is as follows. Steroid phosphatase which catalyzes the conversion of inactive phosphorylated ecdysteroids into their active forms. Shows high activity towards ecdysone 22-phosphate (E22P). Has lower activity towards other ecdysteriod phosphates including 20-hydroxyecdysone 22-phosphate (20E22P) and 2-deoxyecdysone 22-phosphate (2dE22P). Also has protein tyrosine phosphatase activity. This is Ecdysteroid-phosphate phosphatase from Bombyx mori (Silk moth).